A 150-amino-acid polypeptide reads, in one-letter code: Flagellar assembly factor FliW (150 aa).

Belongs to the FliW family. In terms of assembly, interacts with translational regulator CsrA and flagellin(s).

Its subcellular location is the cytoplasm. Its function is as follows. Acts as an anti-CsrA protein, binds CsrA and prevents it from repressing translation of its target genes, one of which is flagellin. Binds to flagellin and participates in the assembly of the flagellum. This chain is Flagellar assembly factor FliW, found in Leptospira interrogans serogroup Icterohaemorrhagiae serovar Lai (strain 56601).